The following is a 658-amino-acid chain: DNA-binding protein Rfx5 (658 aa).

Positions 1 to 10 are enriched in basic and acidic residues; the sequence is MAEDKPDAKS. The interval 1-28 is disordered; that stretch reads MAEDKPDAKSPKTGARPQGGADAGEPTT. Alanine 2 is subject to N-acetylalanine. Serine 10 bears the Phosphoserine mark. The interval 24–89 is N-terminal domain; that stretch reads GEPTTLLQRL…PSLLSNEEYM (66 aa). The tract at residues 61–65 is leucine-rich region; critical for dimer formation and for interaction with RFXAP; it reads LYLYL. Positions 91–167 form a DNA-binding region, RFX-type winged-helix; it reads AYRWIRNHLE…YCYSGIRRKT (77 aa). The short motif at 172 to 177 is the PxLPxI/L motif; mediates interaction with RFXANK element; that stretch reads PPLPGL. A Phosphoserine modification is found at serine 184. Disordered stretches follow at residues 250–315, 382–422, 443–602, and 624–658; these read LAEE…SSVP, AGPG…GLGA, VPPR…DKIP, and KGEA…ATPP. Residues 277 to 309 show a composition bias toward basic and acidic residues; sequence GPKKPERPAQPPKEQEARAGTDLPGRAERKKSV. Composition is skewed to gly residues over residues 382–398 and 406–422; these read AGPG…GPGP and PGLG…GLGA. Composition is skewed to basic and acidic residues over residues 465–476 and 489–498; these read PRPHDKGIKRTA and PVKEMKHETQ. Basic residues predominate over residues 506–516; the sequence is KRKRGRPRKKP. Positions 648-658 are enriched in basic and acidic residues; the sequence is PEHKDPKATPP.

It belongs to the RFX family. Homodimer. The RFX heterotetrameric complex consists of 2 molecules of RFX5 and one each of RFXAP and RFX-B/RFXANK; with each subunit representing a separate complementation group. Interacts (via PxLPxI/L motif) with RFXANK (via ankyrin repeats); the interaction is direct. RFX forms cooperative DNA binding complexes with X2BP and CBF/NF-Y. RFX associates with CIITA to form an active transcriptional complex. In terms of processing, phosphorylated.

It is found in the nucleus. Its function is as follows. Activates transcription from class II MHC promoters. Recognizes X-boxes. Mediates cooperative binding between RFX and NF-Y. RFX binds the X1 box of MHC-II promoters. The polypeptide is DNA-binding protein Rfx5 (Rfx5) (Mus musculus (Mouse)).